Here is a 528-residue protein sequence, read N- to C-terminus: ATP synthase subunit beta 2 (528 aa).

The span at 1-10 (MADPQATNGT) shows a compositional bias: polar residues. The disordered stretch occupies residues 1–27 (MADPQATNGTGAACAERDASDVGDARD). Residues 15–27 (AERDASDVGDARD) are compositionally biased toward basic and acidic residues. 179-186 (GGAGVGKT) lines the ATP pocket. Residues 488–499 (AAAREADARREA) show a composition bias toward basic and acidic residues. Positions 488 to 528 (AAAREADARREAAAAASGAGPGTTSDPASGSAEPQGARHGR) are disordered.

The protein belongs to the ATPase alpha/beta chains family. As to quaternary structure, F-type ATPases have 2 components, CF(1) - the catalytic core - and CF(0) - the membrane proton channel. CF(1) has five subunits: alpha(3), beta(3), gamma(1), delta(1), epsilon(1). CF(0) has three main subunits: a(1), b(2) and c(9-12). The alpha and beta chains form an alternating ring which encloses part of the gamma chain. CF(1) is attached to CF(0) by a central stalk formed by the gamma and epsilon chains, while a peripheral stalk is formed by the delta and b chains.

It is found in the cell inner membrane. It catalyses the reaction ATP + H2O + 4 H(+)(in) = ADP + phosphate + 5 H(+)(out). Functionally, produces ATP from ADP in the presence of a proton gradient across the membrane. The catalytic sites are hosted primarily by the beta subunits. This Burkholderia pseudomallei (strain 1106a) protein is ATP synthase subunit beta 2.